The primary structure comprises 260 residues: MVLIRVLANLLILQLSYAQKSSELIIGGDECNINEHRFLVALYTFRSRRFHCGGTLINQEWVLSAARCDRKNIRIKLGMHSTNVTNEDVQTRVPKEKFFCLSSKTYTKWNKDIMLIRLKRPVNNSTHIAPVSLPSNPPSLGLVCRVMGWGTISATKETHPDVPHCANINILDYSVCRAAYARLPATSRTLCAGILEGGKDTCHGDSGGPLICNGQVQGIVSWGGHPCGQPRKPGLYTKVFDHLDWIKSIIAGNKDATCPP.

Positions 1 to 18 are cleaved as a signal peptide; the sequence is MVLIRVLANLLILQLSYA. The propeptide occupies 19–24; that stretch reads QKSSEL. In terms of domain architecture, Peptidase S1 spans 25–251; that stretch reads IIGGDECNIN…HLDWIKSIIA (227 aa). Disulfide bonds link cysteine 31–cysteine 165, cysteine 52–cysteine 68, cysteine 100–cysteine 258, cysteine 144–cysteine 212, cysteine 176–cysteine 191, and cysteine 202–cysteine 227. 3 N-linked (GlcNAc...) asparagine glycosylation sites follow: asparagine 83, asparagine 123, and asparagine 124.

It belongs to the peptidase S1 family. Snake venom subfamily. Expressed by the venom gland.

It is found in the secreted. Functionally, snake venom serine protease homolog that may act in the hemostasis system of the prey. This chain is Snake venom serine protease homolog KN7, found in Trimeresurus stejnegeri (Chinese green tree viper).